A 228-amino-acid polypeptide reads, in one-letter code: Large ribosomal subunit protein bL25 (228 aa).

The segment at 196–228 (EEAAVAEAQSAESAEGKAEAEAEATNEKNKSEA) is disordered. Residues 209–228 (AEGKAEAEAEATNEKNKSEA) show a composition bias toward basic and acidic residues.

Belongs to the bacterial ribosomal protein bL25 family. CTC subfamily. Part of the 50S ribosomal subunit; part of the 5S rRNA/L5/L18/L25 subcomplex. Contacts the 5S rRNA. Binds to the 5S rRNA independently of L5 and L18.

This is one of the proteins that binds to the 5S RNA in the ribosome where it forms part of the central protuberance. The sequence is that of Large ribosomal subunit protein bL25 from Methylorubrum extorquens (strain CM4 / NCIMB 13688) (Methylobacterium extorquens).